The following is a 454-amino-acid chain: MRTIATYQNQSVLVLGLGKSGVNATKLLLQLGAKVTVNDGQDQEDTPAVAELRALGATVITGSHPVALFEEGFHYLFKNPGIRYDNPMVAEAIKREIPVLTEPELAYEVSEADWVSVTGSNGKTTTTTLIALMLNYQRAQGHAYAAGNIGIPLSEVAQKATAKDTMVTELSSFQLMGTTTVKPKVAVLTNIYEAHLDYHGTRENYVQAKMRIVQNQTASDYFVVNWDLPELRTLSQQTKAQVVPFSRLGTSEEGAYVKDGQLCFKGEVIMPVTDINVPGDHNVENALAALAAAKLMGQSNEAIIEVLTTFTGVKHRMQFVKEFAGRRFYNDSKATNMEATEVALKSFKQPIVLIAGGLDRGFTFEPLTDLLKAHVKAIILYGETKQLLAQTAKEAGIETIEIVDQLTEAVPAAYAASQEGDVILLSPACASWDQFKTFEERGDVYIDAVEQITE.

119 to 125 is a binding site for ATP; that stretch reads GSNGKTT.

It belongs to the MurCDEF family.

The protein resides in the cytoplasm. The enzyme catalyses UDP-N-acetyl-alpha-D-muramoyl-L-alanine + D-glutamate + ATP = UDP-N-acetyl-alpha-D-muramoyl-L-alanyl-D-glutamate + ADP + phosphate + H(+). The protein operates within cell wall biogenesis; peptidoglycan biosynthesis. Its function is as follows. Cell wall formation. Catalyzes the addition of glutamate to the nucleotide precursor UDP-N-acetylmuramoyl-L-alanine (UMA). The chain is UDP-N-acetylmuramoylalanine--D-glutamate ligase from Latilactobacillus sakei subsp. sakei (strain 23K) (Lactobacillus sakei subsp. sakei).